Consider the following 320-residue polypeptide: Aristolochene synthase (320 aa).

The segment covering 1–14 (MKKPNGTNGASSSL) has biased composition (polar residues). The segment at 1–20 (MKKPNGTNGASSSLEPPPST) is disordered. 4 residues coordinate Mg(2+): Asp-90, Asn-219, Ser-223, and Glu-227. (2E,6E)-farnesyl diphosphate is bound by residues Arg-314 and Tyr-315.

The protein belongs to the terpene synthase family. As to quaternary structure, homodimer. Requires Mg(2+) as cofactor.

The enzyme catalyses (2E,6E)-farnesyl diphosphate = (+)-aristolochene + diphosphate. It functions in the pathway sesquiterpene biosynthesis; aristolochene biosynthesis; aristolochene from farnesyl diphosphate: step 1/1. Catalyzes the cyclization of trans,trans-farnesyl diphosphate (FPP) to the bicyclic sesquiterpene aristolochene. Produces germacrene A as an enzyme-bound intermediate that is not released by the enzyme, but is further cyclized to produce aristolochene. Aristolochene is the likely parent compound for a number of sesquiterpenoid toxins produced by filamentous fungi. This chain is Aristolochene synthase (Ari1), found in Aspergillus terreus.